Here is a 384-residue protein sequence, read N- to C-terminus: Signal peptide peptidase-like 3 (384 aa).

The Lumenal portion of the chain corresponds to 1 to 8 (MAEQTYSW). The helical transmembrane segment at 9 to 29 (AYSLVDSSQVSTFLISILLIV) threads the bilayer. The Cytoplasmic segment spans residues 30-73 (YGSFRSLNMDFENQDKEKDSNSSSGSFNGNSTNNSIQTIDSTQA). The helical transmembrane segment at 74–94 (LFLPIGASVSLLVMFFFFDSV) threads the bilayer. Position 95 (glutamine 95) is a topological domain, lumenal. Residues 96 to 116 (VVFTICTAVLATIAFAFLLLP) traverse the membrane as a helical segment. The Cytoplasmic segment spans residues 117–138 (MCQYLTRPCSPQNKISFGCCGR). Residues 139–159 (FTAAELLSFSLSVMLVLIWVL) form a helical membrane-spanning segment. The Lumenal segment spans residues 160 to 164 (TGHWL). A helical membrane pass occupies residues 165–185 (LMDALAMGLCVAMIAFVRLPS). Topologically, residues 186–190 (LKVSC) are cytoplasmic. A helical membrane pass occupies residues 191-211 (LLLSGLLIYDVFWVFFSAYIF). The active site involves aspartate 200. Residues 212-262 (NSNVMVKVATQPADNPLDVLSRKLHLGPNVGRDVPRLSLPGKLVFPSSTGS) lie on the Lumenal side of the membrane. Residues 263–283 (HFSMLGIGDIVMPGLLLCFVL) form a helical membrane-spanning segment. Aspartate 271 is an active-site residue. At 284–311 (RYDNYKKQASGDSCGAPGPANISGRMQK) the chain is on the cytoplasmic side. The helical transmembrane segment at 312-332 (VSYFHCTLIGYFVGLLTATVA) threads the bilayer. Over 333-339 (SRIHRAA) the chain is Lumenal. Residues 340–360 (QPALLYLVPFTLLPLLTMAYL) traverse the membrane as a helical segment. The PAL signature appears at 341–343 (PAL). The Cytoplasmic segment spans residues 361-384 (KGDLRRMWSEPFHSKSSSSRFLEV).

The protein belongs to the peptidase A22B family. As to quaternary structure, monomer. Homodimer. Interacts with STIM1 (via transmembrane region and SOAR/CAD domain); the interaction promotes the binding of STIM1 to ORAI1. Not glycosylated.

The protein resides in the endoplasmic reticulum membrane. It localises to the golgi apparatus. It is found in the membrane. Its activity is regulated as follows. Its proteolytic activity is blocked by a signal peptide peptidase (SPP) inhibitor, (ZLL)2-ketone (ZLL) or a gamma-secretase inhibitor, LY411,575. Intramembrane-cleaving aspartic protease (I-CLiP) that cleaves type II membrane protein substrates in or close to their luminal transmembrane domain boundaries. Acts like a sheddase by mediating the proteolytic release and secretion of active site-containing ectodomains of glycan-modifiying glycosidase and glycosyltransferase enzymes such as MGAT5, B4GAT1 and B4GALT1. Plays a role in the regulation of cellular glycosylation processes. Required to link T-cell antigen receptor (TCR) and calcineurin-NFAT signaling cascades in lymphocytes by promoting the association of STIM1 and ORAI1 during store-operated calcium entry (SOCE) in a protease-independent manner. This Mus musculus (Mouse) protein is Signal peptide peptidase-like 3.